The following is a 186-amino-acid chain: Adenine phosphoribosyltransferase (186 aa).

Belongs to the purine/pyrimidine phosphoribosyltransferase family. In terms of assembly, homodimer.

The protein resides in the cytoplasm. The enzyme catalyses AMP + diphosphate = 5-phospho-alpha-D-ribose 1-diphosphate + adenine. It functions in the pathway purine metabolism; AMP biosynthesis via salvage pathway; AMP from adenine: step 1/1. Catalyzes a salvage reaction resulting in the formation of AMP, that is energically less costly than de novo synthesis. This is Adenine phosphoribosyltransferase from Sulfurovum sp. (strain NBC37-1).